A 73-amino-acid chain; its full sequence is Acyl carrier protein homolog (73 aa).

The 72-residue stretch at M1–S72 folds into the Carrier domain. At S32 the chain carries O-(pantetheine 4'-phosphoryl)serine.

Post-translationally, 4'-phosphopantetheine is transferred from CoA to a specific serine of the apo-ACP-like protein.

It functions in the pathway lipid metabolism; fatty acid biosynthesis. Carrier of the growing fatty acid chain in fatty acid biosynthesis. This chain is Acyl carrier protein homolog, found in Mycoplasmopsis pulmonis (strain UAB CTIP) (Mycoplasma pulmonis).